Here is a 194-residue protein sequence, read N- to C-terminus: Large ribosomal subunit protein eL15 (194 aa).

A disordered region spans residues 161–194 (GLTSAGKKGRGLMYKGKGAEKARPSVRANGKKTK).

The protein belongs to the eukaryotic ribosomal protein eL15 family.

The sequence is that of Large ribosomal subunit protein eL15 from Methanococcus maripaludis (strain C5 / ATCC BAA-1333).